Reading from the N-terminus, the 152-residue chain is Atypical leghemoglobin 2-1 (152 aa).

Positions T3 to S152 constitute a Globin domain. The residue at position 31 (Y31) is a Nitrated tyrosine. S46 contributes to the heme b binding site. S46 carries the phosphoserine modification. H64 lines the O2 pocket. 3 residues coordinate heme b: K67, H99, and R102. Y140 carries the nitrated tyrosine modification.

Belongs to the plant globin family. As to quaternary structure, monomer. In terms of processing, nitrated in effective nodules and particularly in hypoxic conditions; this mechanism may play a protective role in the symbiosis by buffering toxic peroxynitrite NO(2)(-). Nitration level decrease during nodule senescence. Post-translationally, phosphorylation at Ser-46 disrupts the molecular environment of its porphyrin ring oxygen binding pocket, thus leading to a reduced oxygen consumption and to the delivery of oxygen O(2) to symbiosomes. Mainly expressed in leaves and, at low levels, in roots of non-nodulated plants. However, accumulates also in nodules and roots, and, to a lower extent, in leaves, stems, flowers and fruits, in nodulated plants.

In terms of biological role, atypical leghemoglobin that reversibly binds oxygen O(2) through a pentacoordinated heme iron. In nodules, facilitates the diffusion of oxygen to the bacteroids while preventing the bacterial nitrogenase from being inactivated by buffering dioxygen, nitric oxide and carbon monoxide. This role is essential for symbiotic nitrogen fixation (SNF). Seems not restricted to symbiotic nitrogen fixation and root nodules formation, but also contributes to general plant development and metabolism. This Lotus japonicus (Lotus corniculatus var. japonicus) protein is Atypical leghemoglobin 2-1.